Here is a 164-residue protein sequence, read N- to C-terminus: Peptide deformylase-like (164 aa).

Glu-133 is a catalytic residue.

The protein belongs to the polypeptide deformylase family.

The chain is Peptide deformylase-like from Agrobacterium fabrum (strain C58 / ATCC 33970) (Agrobacterium tumefaciens (strain C58)).